The primary structure comprises 409 residues: uncharacterized protein (409 aa).

10 helical membrane-spanning segments follow: residues 18–38 (ALSA…ADVV), 47–67 (GPLL…TGVG), 100–120 (VVTV…ALVI), 159–179 (VGAM…GNAY), 180–200 (APAL…LLWL), 232–252 (FWLY…FGLL), 260–280 (GVLA…ADAL), 302–322 (ILSI…VVIG), 355–375 (GVFA…IGWL), and 380–400 (IGTL…MMFA).

It is found in the cell membrane. This is an uncharacterized protein from Mycobacterium tuberculosis (strain CDC 1551 / Oshkosh).